A 677-amino-acid chain; its full sequence is Regulator of G-protein signaling 9 (677 aa).

Positions Pro30–Thr105 constitute a DEP domain. Positions Val219–Leu280 constitute a G protein gamma domain. An RGS domain is found at Arg295 to Lys416. 2 disordered regions span residues Ser530–Leu571 and Asp639–Gly677.

As to quaternary structure, heterodimer with GNB5. Interacts with RGS7BP, leading to regulate the subcellular location of the heterodimer formed with GNB5. Component of the RGS9-1-Gbeta5 complex composed of RGS9 (RGS9-1), Gbeta5 (GNB5) and RGS9BP. Interacts with PDE6G and GNAT1. Expressed in the central nervous system. Isoform RGS9L is found in striatum, hypothalamus and nucleus accumbens while isoform RGS9S is expressed in retina and pineal gland.

It is found in the membrane. Inhibits signal transduction by increasing the GTPase activity of G protein alpha subunits thereby driving them into their inactive GDP-bound form. Binds to GNAT1. Involved in phototransduction; key element in the recovery phase of visual transduction. The protein is Regulator of G-protein signaling 9 (Rgs9) of Rattus norvegicus (Rat).